A 545-amino-acid chain; its full sequence is Chaperonin GroEL (545 aa).

ATP contacts are provided by residues 30 to 33, K51, 87 to 91, G415, 483 to 485, and D499; these read TLGP, DGTTT, and NAA.

It belongs to the chaperonin (HSP60) family. Forms a cylinder of 14 subunits composed of two heptameric rings stacked back-to-back. Interacts with the co-chaperonin GroES.

It localises to the cytoplasm. The catalysed reaction is ATP + H2O + a folded polypeptide = ADP + phosphate + an unfolded polypeptide.. Together with its co-chaperonin GroES, plays an essential role in assisting protein folding. The GroEL-GroES system forms a nano-cage that allows encapsulation of the non-native substrate proteins and provides a physical environment optimized to promote and accelerate protein folding. This chain is Chaperonin GroEL, found in Aquifex aeolicus (strain VF5).